Here is a 481-residue protein sequence, read N- to C-terminus: Cobyric acid synthase (481 aa).

The GATase cobBQ-type domain maps to 248–435; sequence NTVIAVPMLP…LHGLFHGGAF (188 aa). C329 functions as the Nucleophile in the catalytic mechanism. The active site involves H427.

The protein belongs to the CobB/CobQ family. CobQ subfamily.

It participates in cofactor biosynthesis; adenosylcobalamin biosynthesis. Its function is as follows. Catalyzes amidations at positions B, D, E, and G on adenosylcobyrinic A,C-diamide. NH(2) groups are provided by glutamine, and one molecule of ATP is hydrogenolyzed for each amidation. The polypeptide is Cobyric acid synthase (Granulibacter bethesdensis (strain ATCC BAA-1260 / CGDNIH1)).